The following is a 1058-amino-acid chain: Zinc finger protein 865 (1058 aa).

Disordered regions lie at residues 1–24 (MEAN…EDGV), 58–134 (LPCT…PPLF), and 156–201 (GNLK…ACDP). The span at 8-21 (SGAGGGGSSGIGGE) shows a compositional bias: gly residues. The segment covering 61–78 (TPGPPPQPPPQPPPPQYD) has biased composition (pro residues). Low complexity predominate over residues 93–113 (SSSSSSSSSSSSSSSSSSSSS). Residues 120–133 (PPLPPTFGAPPPPL) show a composition bias toward pro residues. Over residues 172–187 (GLGTPTGTPGPLTTPS) the composition is skewed to low complexity. 2 C2H2-type zinc fingers span residues 220–242 (FPCG…MLVH) and 248–270 (YECG…RRCH). Residues 269-342 (CHKDVPPTPT…PPGVAMPPSA (74 aa)) are disordered. The segment covering 294–324 (PVSTASATASSDPAAVSSGPSATPATPATST) has biased composition (low complexity). 9 C2H2-type zinc fingers span residues 350 to 372 (FACS…QIIH), 378 to 400 (FSCS…VKTH), 407 to 429 (LPCG…QAAH), 439 to 461 (YPCD…KAAH), 546 to 568 (FCCG…ERIH), 574 to 596 (HQCP…HVVH), 602 to 624 (YKCE…RQVH), 664 to 686 (YACS…KEAH), and 692 to 714 (YGCD…KLVH). Residues 459-486 (AAHAPPVATEPAKDGAASVPQPPPPFPP) form a disordered region. The interval 721 to 743 (LLAPTPSGPQSSDGGSSGGGTDA) is disordered. 9 consecutive C2H2-type zinc fingers follow at residues 791–813 (FSCA…KYVH), 819–841 (LGCG…RRSH), 847–869 (FRCP…QRCH), 875–897 (YRCG…RVVH), 903–925 (FKCG…RRLH), 931–953 (QRCG…QRLH), 959–981 (YRCE…QRAH), 988–1010 (LRCP…LAAH), and 1016–1038 (FRCS…RLMH). A Glycyl lysine isopeptide (Lys-Gly) (interchain with G-Cter in SUMO2) cross-link involves residue lysine 801. Lysine 1039 is covalently cross-linked (Glycyl lysine isopeptide (Lys-Gly) (interchain with G-Cter in SUMO2)).

The protein belongs to the krueppel C2H2-type zinc-finger protein family.

The protein resides in the nucleus. Its function is as follows. May be involved in transcriptional regulation. In Mus musculus (Mouse), this protein is Zinc finger protein 865 (Znf865).